The sequence spans 423 residues: Protein FAM43A (423 aa).

The segment covering 263–283 (EQELQEEEEEEQPEGCPEEEE) has biased composition (acidic residues). Disordered stretches follow at residues 263–298 (EQEL…EAEA), 321–344 (RGEA…LLLG), and 382–423 (LSGD…PHSG). Gly residues predominate over residues 323 to 335 (EALGGGGGSLGPG). The segment covering 383–393 (SGDSTGSESSI) has biased composition (low complexity). Residues 401 to 411 (TSATAGDSSRQ) show a composition bias toward polar residues.

This sequence belongs to the FAM43 family.

This chain is Protein FAM43A (FAM43A), found in Homo sapiens (Human).